A 61-amino-acid chain; its full sequence is Small ribosomal subunit protein uS14 (61 aa).

C24, C27, C40, and C43 together coordinate Zn(2+).

Belongs to the universal ribosomal protein uS14 family. Zinc-binding uS14 subfamily. Part of the 30S ribosomal subunit. Contacts proteins S3 and S10. Zn(2+) serves as cofactor.

Its function is as follows. Binds 16S rRNA, required for the assembly of 30S particles and may also be responsible for determining the conformation of the 16S rRNA at the A site. This is Small ribosomal subunit protein uS14 from Mycoplasmopsis agalactiae (strain NCTC 10123 / CIP 59.7 / PG2) (Mycoplasma agalactiae).